A 224-amino-acid chain; its full sequence is Peroxiredoxin-6 (224 aa).

In terms of domain architecture, Thioredoxin spans 5–169 (LLLGDVAPNF…ILRVVISLQL (165 aa)). Positions 31–40 (DSWGILFSHP) are required and sufficient for targeting to lysosomes and lamellar bodies. Phosphothreonine is present on Thr44. Cys47 serves as the catalytic Cysteine sulfenic acid (-SOH) intermediate; for peroxidase activity. At Lys63 the chain carries N6-acetyllysine. Tyr89 is modified (phosphotyrosine). Asp140 acts as the For phospholipase activity in catalysis. A Phosphothreonine; by MAPK modification is found at Thr177. Lys209 carries the N6-acetyllysine; alternate modification. Lys209 is subject to N6-succinyllysine; alternate.

It belongs to the peroxiredoxin family. Prx6 subfamily. Homodimer. Interacts with GSTP1; mediates PRDX6 glutathionylation and regeneration. Interacts with APEX1. Interacts with STH. May interact with FAM168B. May interact with HTR2A. In terms of processing, irreversibly inactivated by overoxidation of Cys-47 to sulfinic acid (Cys-SO(2)H) and sulfonic acid (Cys-SO(3)H) forms upon oxidative stress. Post-translationally, phosphorylation at Thr-177 by MAP kinases increases the phospholipase activity of the enzyme. The phosphorylated form exhibits a greater lysophosphatidylcholine acyltransferase activity compared to the non-phosphorylated form.

It localises to the cytoplasm. Its subcellular location is the lysosome. The catalysed reaction is a hydroperoxide + 2 glutathione = an alcohol + glutathione disulfide + H2O. It carries out the reaction a 1,2-diacyl-sn-glycero-3-phosphocholine + H2O = a 1-acyl-sn-glycero-3-phosphocholine + a fatty acid + H(+). It catalyses the reaction a 1-acyl-sn-glycero-3-phosphocholine + an acyl-CoA = a 1,2-diacyl-sn-glycero-3-phosphocholine + CoA. The enzyme catalyses 1-hexadecanoyl-sn-glycero-3-phosphocholine + hexadecanoyl-CoA = 1,2-dihexadecanoyl-sn-glycero-3-phosphocholine + CoA. The catalysed reaction is 1,2-dihexadecanoyl-sn-glycero-3-phosphocholine + H2O = 1-hexadecanoyl-sn-glycero-3-phosphocholine + hexadecanoate + H(+). In terms of biological role, thiol-specific peroxidase that catalyzes the reduction of hydrogen peroxide and organic hydroperoxides to water and alcohols, respectively. Can reduce H(2)O(2) and short chain organic, fatty acid, and phospholipid hydroperoxides. Also has phospholipase activity, and can therefore either reduce the oxidized sn-2 fatty acyl group of phospholipids (peroxidase activity) or hydrolyze the sn-2 ester bond of phospholipids (phospholipase activity). These activities are dependent on binding to phospholipids at acidic pH and to oxidized phospholipds at cytosolic pH. Plays a role in cell protection against oxidative stress by detoxifying peroxides and in phospholipid homeostasis. Exhibits acyl-CoA-dependent lysophospholipid acyltransferase which mediates the conversion of lysophosphatidylcholine (1-acyl-sn-glycero-3-phosphocholine or LPC) into phosphatidylcholine (1,2-diacyl-sn-glycero-3-phosphocholine or PC). Shows a clear preference for LPC as the lysophospholipid and for palmitoyl CoA as the fatty acyl substrate. The sequence is that of Peroxiredoxin-6 (PRDX6) from Pongo abelii (Sumatran orangutan).